A 428-amino-acid polypeptide reads, in one-letter code: tRNA(Ile)-lysidine synthase (428 aa).

Serine 28–serine 33 is a binding site for ATP.

It belongs to the tRNA(Ile)-lysidine synthase family.

It localises to the cytoplasm. The enzyme catalyses cytidine(34) in tRNA(Ile2) + L-lysine + ATP = lysidine(34) in tRNA(Ile2) + AMP + diphosphate + H(+). In terms of biological role, ligates lysine onto the cytidine present at position 34 of the AUA codon-specific tRNA(Ile) that contains the anticodon CAU, in an ATP-dependent manner. Cytidine is converted to lysidine, thus changing the amino acid specificity of the tRNA from methionine to isoleucine. This chain is tRNA(Ile)-lysidine synthase, found in Streptococcus pyogenes serotype M18 (strain MGAS8232).